The primary structure comprises 507 residues: Cytochrome c-type protein ImcH (507 aa).

Helical transmembrane passes span 14–34 (ISLIGFLLAVVATGLIIAFIA), 45–65 (YIGLLVYFAFPGMLILGLILV), and 100–120 (LFIFFVLASVIFVLIVSVASI). Positions 132, 136, 140, 152, 157, 160, 161, 400, 449, 452, 453, 487, 490, 491, and 496 each coordinate heme.

Belongs to the NapC/NirT/NrfH family. Binds 4 heme c groups covalently per subunit.

The protein localises to the cell inner membrane. Functionally, redox protein involved in a high-potential metal respiratory pathway. Is required only for electron transfer to terminal extracellular electron acceptors with redox potentials higher than -0.1 V. ImcH likely transfers electrons from the quinone pool to a periplasmic acceptor. This Geobacter sulfurreducens (strain ATCC 51573 / DSM 12127 / PCA) protein is Cytochrome c-type protein ImcH.